The primary structure comprises 1889 residues: Treslin (1889 aa).

Phosphoserine is present on residues serine 295, serine 599, serine 820, serine 861, serine 919, serine 934, serine 1002, serine 1027, and serine 1078. Residues 812-832 (DSMSQESMSPPPSSSTHRSVS) show a composition bias toward low complexity. A disordered region spans residues 812–836 (DSMSQESMSPPPSSSTHRSVSAITE). Residues 979–1063 (RLLHRQIKGR…RENFPVQSIQ (85 aa)) form a disordered region. A compositionally biased stretch (polar residues) spans 1020–1050 (LSFSRTNSGSFYSVSQPKSRSVQRIHSSQQE). Disordered regions lie at residues 1098–1421 (EIST…SQFS), 1471–1508 (LPGE…SSSE), 1520–1543 (GKQR…SPQT), 1630–1714 (SCTP…SLEQ), 1730–1751 (VCQL…ETSW), and 1841–1875 (QGRT…TLSR). Over residues 1127–1179 (TAQTLLYTPERLQNSPTEMTSAEGTISEATIKTPSSHGYNSPFASKVTSQKTV) the composition is skewed to polar residues. At threonine 1134 the chain carries Phosphothreonine. A Phosphoserine modification is found at serine 1141. Positions 1187–1197 (SPPLTKLPSTP) are enriched in low complexity. Residues 1203-1219 (QPPQCSSDCTWPHSVNS) show a composition bias toward polar residues. A compositionally biased stretch (low complexity) spans 1339-1351 (TSPSVTSSVSCPV). Basic residues predominate over residues 1373-1382 (KLRRSCRKKS). At serine 1406 the chain carries Phosphoserine. Low complexity predominate over residues 1496–1508 (LVPAPSSVSSSSE). Polar residues-rich tracts occupy residues 1525-1543 (DAAQ…SPQT) and 1652-1662 (WTPSPKQSGKT). The segment covering 1705–1714 (PEGKERSLEQ) has biased composition (basic and acidic residues).

Belongs to the treslin family. In terms of assembly, interacts with TOPBP1 (via BRCT domains); interaction takes place in a CDK2-dependent manner. Component of the replisome complex composed of at least DONSON, MCM2, MCM7, PCNA and TICRR.

It is found in the nucleus. Functionally, regulator of DNA replication and S/M and G2/M checkpoints. Regulates the triggering of DNA replication initiation via its interaction with TOPBP1 by participating in CDK2-mediated loading of CDC45L onto replication origins. Required for the transition from pre-replication complex (pre-RC) to pre-initiation complex (pre-IC). Required to prevent mitotic entry after treatment with ionizing radiation. This is Treslin (Ticrr) from Mus musculus (Mouse).